Reading from the N-terminus, the 121-residue chain is Cell division protein FtsB (121 aa).

Topologically, residues 1-6 (MRNWRW) are cytoplasmic. A helical transmembrane segment spans residues 7–24 (LLLVLAVLLAWLQYRFWF). At 25–121 (GPGNSGEVMM…PASTDPVDHP (97 aa)) the chain is on the periplasmic side. Residues 31 to 66 (EVMMLEAQVAHQTQDNEGLRQRNQALAAEVKDLKDG) are a coiled coil. The disordered stretch occupies residues 94–121 (APLPAPASPETAAPAQQAPASTDPVDHP). Over residues 101–121 (SPETAAPAQQAPASTDPVDHP) the composition is skewed to low complexity.

It belongs to the FtsB family. In terms of assembly, part of a complex composed of FtsB, FtsL and FtsQ.

Its subcellular location is the cell inner membrane. Functionally, essential cell division protein. May link together the upstream cell division proteins, which are predominantly cytoplasmic, with the downstream cell division proteins, which are predominantly periplasmic. This chain is Cell division protein FtsB, found in Xanthomonas oryzae pv. oryzae (strain MAFF 311018).